A 329-amino-acid polypeptide reads, in one-letter code: GTP 3',8-cyclase (329 aa).

The Radical SAM core domain maps to 8–234; it reads AFARKFYYLR…QLRQRSDGPA (227 aa). Position 17 (Arg17) interacts with GTP. 2 residues coordinate [4Fe-4S] cluster: Cys24 and Cys28. Residue Tyr30 participates in S-adenosyl-L-methionine binding. Cys31 is a [4Fe-4S] cluster binding site. Arg68 lines the GTP pocket. Gly72 provides a ligand contact to S-adenosyl-L-methionine. Thr99 serves as a coordination point for GTP. Ser123 is a binding site for S-adenosyl-L-methionine. Lys160 provides a ligand contact to GTP. Met194 lines the S-adenosyl-L-methionine pocket. Residues Cys257 and Cys260 each contribute to the [4Fe-4S] cluster site. 262 to 264 provides a ligand contact to GTP; the sequence is RLR. A [4Fe-4S] cluster-binding site is contributed by Cys274.

This sequence belongs to the radical SAM superfamily. MoaA family. In terms of assembly, monomer and homodimer. Requires [4Fe-4S] cluster as cofactor.

It carries out the reaction GTP + AH2 + S-adenosyl-L-methionine = (8S)-3',8-cyclo-7,8-dihydroguanosine 5'-triphosphate + 5'-deoxyadenosine + L-methionine + A + H(+). It functions in the pathway cofactor biosynthesis; molybdopterin biosynthesis. In terms of biological role, catalyzes the cyclization of GTP to (8S)-3',8-cyclo-7,8-dihydroguanosine 5'-triphosphate. This is GTP 3',8-cyclase from Salmonella dublin (strain CT_02021853).